A 2167-amino-acid polypeptide reads, in one-letter code: RNA editing associated helicase 2 (2167 aa).

Residues 1 to 30 (MRAIRLTVACRYLGPFRSVTLSPVVLPVRL) constitute a mitochondrion transit peptide. 2 disordered regions span residues 503–593 (RARG…DEAT) and 937–969 (ENAT…PTNV). The span at 532–541 (SSTQTPSSST) shows a compositional bias: low complexity. The DRBM domain maps to 1024–1095 (DAKTVLQRYC…AMHALALLRR (72 aa)). A Helicase ATP-binding domain is found at 1348 to 1513 (LRAISSNQIV…FGNAPIINVE (166 aa)). 1361–1368 (GTTGCGKT) contributes to the ATP binding site. Positions 1366–1367 (GK) match the Important for binding to gRNA motif. Residues 1460-1463 (DEIH) carry the DEAH box motif. Residues 1585 to 1762 (AIDHAVRSLD…SLCLQILALD (178 aa)) form the Helicase C-terminal domain. The tract at residues 2132-2167 (IIEPCTEPKGGSSEAEKTHVNSSHTPTTSAEAGGDS) is disordered. Over residues 2151–2161 (VNSSHTPTTSA) the composition is skewed to polar residues.

Belongs to the DEAD box helicase family. DEAH subfamily. As to quaternary structure, component of the REH2-associated complex (REH2C) composed of helicase REH2, associated factors H2F1 and H2F2, and mRNAs at various editing stages; the formation of the complex is RNA-independent. Within the complex, interacts with H2F1; the interaction is direct. Interacts transiently, in a RNA-dependent manner, with various editing complexes including the RNA editing core (RECC) complex, the gRNA-binding (GRBC) complex (also known as the MRB1 complex) and the RNA editing mediator (REMC) complex. Interacts with GAP1/GRBC2 via RNA forming a variant of the GRBC complex known as REH2-GRBC complex. Interacts with mitochondrial ribosomes.

It localises to the mitochondrion. The catalysed reaction is ATP + H2O = ADP + phosphate + H(+). In terms of biological role, ATP-dependent RNA helicase that unwinds RNA in a 3' to 5' direction and that plays an important role in mitochondrial mRNA editing, a process involving the addition and deletion of uridine (U) nucleotides in the pre-mRNA. As part of the RET2-containing gRNA-binding (RET2-GRBC) complex, acts as a scaffold for the assembly of mRNA-gRNA hybrids and the recruitment of the RNA editing core (RECC) complex. Regulates several steps of mRNA editing by the MRBC3010/GRBC6 containing gRNA-binding (MRBC3010-GRBC) complex including loading of unedited mRNA, editing in the first sequence block and subsequent editing progression across multiple sequence blocks. Also, regulates the RNA substrate content of the MRBC3010-GRBC complex as well as the association of this complex with mitoribosomes. This chain is RNA editing associated helicase 2, found in Trypanosoma brucei brucei (strain 927/4 GUTat10.1).